The following is a 178-amino-acid chain: Acireductone dioxygenase (178 aa).

Fe(2+)-binding residues include His81, His83, Glu87, and His126. Ni(2+) contacts are provided by His81, His83, Glu87, and His126.

Belongs to the acireductone dioxygenase (ARD) family. The cofactor is Fe(2+). Requires Ni(2+) as cofactor.

It localises to the cytoplasm. Its subcellular location is the nucleus. The catalysed reaction is 1,2-dihydroxy-5-(methylsulfanyl)pent-1-en-3-one + O2 = 4-methylsulfanyl-2-oxobutanoate + formate + 2 H(+). It catalyses the reaction 1,2-dihydroxy-5-(methylsulfanyl)pent-1-en-3-one + O2 = 3-(methylsulfanyl)propanoate + CO + formate + 2 H(+). It functions in the pathway amino-acid biosynthesis; L-methionine biosynthesis via salvage pathway; L-methionine from S-methyl-5-thio-alpha-D-ribose 1-phosphate: step 5/6. Its function is as follows. Catalyzes 2 different reactions between oxygen and the acireductone 1,2-dihydroxy-3-keto-5-methylthiopentene (DHK-MTPene) depending upon the metal bound in the active site. Fe-containing acireductone dioxygenase (Fe-ARD) produces formate and 2-keto-4-methylthiobutyrate (KMTB), the alpha-ketoacid precursor of methionine in the methionine recycle pathway. Ni-containing acireductone dioxygenase (Ni-ARD) produces methylthiopropionate, carbon monoxide and formate, and does not lie on the methionine recycle pathway. In Neurospora crassa (strain ATCC 24698 / 74-OR23-1A / CBS 708.71 / DSM 1257 / FGSC 987), this protein is Acireductone dioxygenase (adi1).